The following is a 455-amino-acid chain: Probable alpha-galactosidase B (455 aa).

The first 16 residues, 1–16 (MIEFLALITLISRANA), serve as a signal peptide directing secretion. Intrachain disulfides connect Cys39–Cys71 and Cys121–Cys151. A glycan (N-linked (GlcNAc...) asparagine) is linked at Asn42. Asp149 (nucleophile) is an active-site residue. 2 N-linked (GlcNAc...) asparagine glycosylation sites follow: Asn177 and Asn192. 222–226 (NWGNA) is a substrate binding site. Asp244 (proton donor) is an active-site residue. Asn395 carries N-linked (GlcNAc...) asparagine glycosylation.

It belongs to the glycosyl hydrolase 27 family.

Its subcellular location is the secreted. It carries out the reaction Hydrolysis of terminal, non-reducing alpha-D-galactose residues in alpha-D-galactosides, including galactose oligosaccharides, galactomannans and galactolipids.. Functionally, hydrolyzes a variety of simple alpha-D-galactoside as well as more complex molecules such as oligosaccharides and polysaccharides. This chain is Probable alpha-galactosidase B (aglB), found in Emericella nidulans (strain FGSC A4 / ATCC 38163 / CBS 112.46 / NRRL 194 / M139) (Aspergillus nidulans).